Consider the following 238-residue polypeptide: Fmr1 neighbor protein (238 aa).

The disordered stretch occupies residues 1–30 (MPSDRRPSQRRNRSKSRDYRGARSKVTRAD). Topologically, residues 1 to 79 (MPSDRRPSQR…CLQYLWARRH (79 aa)) are cytoplasmic. Basic and acidic residues predominate over residues 15–30 (KSRDYRGARSKVTRAD). Residues 80 to 100 (LGLLLLLFWTLVILFRPVNTA) traverse the membrane as a helical segment. Topologically, residues 101 to 178 (KLPILAEAAE…VRDKPTQVLR (78 aa)) are extracellular. The P-type domain maps to 118-176 (MLDFFFPTACIIRDNQVVVACNNQPYLSESECLKSKCCSSTSGTIIKCYAPVRDKPTQV). A helical membrane pass occupies residues 179–199 (VFGLAAISILVLGFLPMCCCS). The Cytoplasmic segment spans residues 200 to 238 (MCWRRKRMNRMLKVLKKQKSKGKKPKGRKASEERALLSH). Residues 214–227 (LKKQKSKGKKPKGR) are compositionally biased toward basic residues. The disordered stretch occupies residues 214 to 238 (LKKQKSKGKKPKGRKASEERALLSH). Basic and acidic residues predominate over residues 228 to 238 (KASEERALLSH).

The protein localises to the membrane. The chain is Fmr1 neighbor protein from Mus musculus (Mouse).